The chain runs to 321 residues: Cytochrome c biogenesis protein CcsA (321 aa).

A run of 8 helical transmembrane segments spans residues 9-29, 44-64, 71-91, 98-118, 143-163, 225-245, 252-272, and 286-306; these read ILTHISFSIISVVITIQLMNL, GMIATFFSITGLLVTRWIYSG, LYESLIFLSWSFSIIHMVPYF, FSAITAPSAIFTQGFATSGLL, MLLSYAALLCGSLLSVALLVI, VISLGFIFLTIGILSGAVWAN, WNWDPKEIWAFITWAIFAIYL, and AIVASIGFLIIWICYFGVNLL.

Belongs to the CcmF/CycK/Ccl1/NrfE/CcsA family. In terms of assembly, may interact with Ccs1.

The protein localises to the plastid. It is found in the chloroplast thylakoid membrane. Functionally, required during biogenesis of c-type cytochromes (cytochrome c6 and cytochrome f) at the step of heme attachment. The protein is Cytochrome c biogenesis protein CcsA of Acorus calamus var. americanus (American sweet flag).